The primary structure comprises 881 residues: DNA replication helicase (881 aa).

The tract at residues 1-32 is disordered; sequence MESADILPGSRGTVDRRCEGSEEKITPPRPVE. The segment covering 13–32 has biased composition (basic and acidic residues); it reads TVDRRCEGSEEKITPPRPVE. Residue 105–112 participates in ATP binding; it reads GNAGSGKS.

This sequence belongs to the herpesviridae helicase family. In terms of assembly, associates with the primase and the primase-associated factor to form the helicase-primase complex.

The protein localises to the host nucleus. In terms of biological role, component of the helicase/primase complex. Unwinds the DNA at the replication forks and generates single-stranded DNA for both leading and lagging strand synthesis. The primase synthesizes short RNA primers on the lagging strand that the polymerase elongates using dNTPs. Possesses helicase-like motifs and therefore may act as the helicase subunit of the complex. The protein is DNA replication helicase of Equus caballus (Horse).